Reading from the N-terminus, the 185-residue chain is Large ribosomal subunit protein uL5 (185 aa).

It belongs to the universal ribosomal protein uL5 family. In terms of assembly, part of the 50S ribosomal subunit; part of the 5S rRNA/L5/L18/L25 subcomplex. Contacts the 5S rRNA and the P site tRNA. Forms a bridge to the 30S subunit in the 70S ribosome.

This is one of the proteins that bind and probably mediate the attachment of the 5S RNA into the large ribosomal subunit, where it forms part of the central protuberance. In the 70S ribosome it contacts protein S13 of the 30S subunit (bridge B1b), connecting the 2 subunits; this bridge is implicated in subunit movement. Contacts the P site tRNA; the 5S rRNA and some of its associated proteins might help stabilize positioning of ribosome-bound tRNAs. The protein is Large ribosomal subunit protein uL5 of Bartonella quintana (strain Toulouse) (Rochalimaea quintana).